Reading from the N-terminus, the 210-residue chain is Large ribosomal subunit protein uL4 (210 aa).

Positions 41–52 (MNNARQGTASSK) are enriched in polar residues. A disordered region spans residues 41–80 (MNNARQGTASSKTRSEVRGGGRKPWRQKGTGRARAGSSRS). Residues 60 to 71 (GGRKPWRQKGTG) are compositionally biased toward basic residues.

Belongs to the universal ribosomal protein uL4 family. As to quaternary structure, part of the 50S ribosomal subunit.

In terms of biological role, one of the primary rRNA binding proteins, this protein initially binds near the 5'-end of the 23S rRNA. It is important during the early stages of 50S assembly. It makes multiple contacts with different domains of the 23S rRNA in the assembled 50S subunit and ribosome. Its function is as follows. Forms part of the polypeptide exit tunnel. This chain is Large ribosomal subunit protein uL4, found in Acaryochloris marina (strain MBIC 11017).